A 404-amino-acid chain; its full sequence is Cysteine desulfurase IscS (404 aa).

Residues 75 to 76 (AT), asparagine 155, glutamine 183, and 203 to 205 (SGH) contribute to the pyridoxal 5'-phosphate site. The residue at position 206 (lysine 206) is an N6-(pyridoxal phosphate)lysine. Threonine 243 contacts pyridoxal 5'-phosphate. Cysteine 328 acts as the Cysteine persulfide intermediate in catalysis. Cysteine 328 contacts [2Fe-2S] cluster.

The protein belongs to the class-V pyridoxal-phosphate-dependent aminotransferase family. NifS/IscS subfamily. In terms of assembly, homodimer. Forms a heterotetramer with IscU, interacts with other sulfur acceptors. Pyridoxal 5'-phosphate serves as cofactor.

The protein resides in the cytoplasm. It catalyses the reaction (sulfur carrier)-H + L-cysteine = (sulfur carrier)-SH + L-alanine. The protein operates within cofactor biosynthesis; iron-sulfur cluster biosynthesis. In terms of biological role, master enzyme that delivers sulfur to a number of partners involved in Fe-S cluster assembly, tRNA modification or cofactor biosynthesis. Catalyzes the removal of elemental sulfur and selenium atoms from cysteine and selenocysteine to produce alanine. Functions as a sulfur delivery protein for Fe-S cluster synthesis onto IscU, an Fe-S scaffold assembly protein, as well as other S acceptor proteins. Also functions as a selenium delivery protein in the pathway for the biosynthesis of selenophosphate. The chain is Cysteine desulfurase IscS from Salmonella arizonae (strain ATCC BAA-731 / CDC346-86 / RSK2980).